Reading from the N-terminus, the 196-residue chain is Phosphoheptose isomerase (196 aa).

The 161-residue stretch at 36-196 (MTNCLINGGK…GIDALLLGVE (161 aa)) folds into the SIS domain. 51–53 (NGG) is a binding site for substrate. Zn(2+) is bound by residues His60 and Glu64. Substrate-binding positions include Glu64, 93–94 (ND), 119–121 (STS), Ser124, and Gln174. Gln174 and His182 together coordinate Zn(2+).

Belongs to the SIS family. GmhA subfamily. In terms of assembly, homotetramer. Zn(2+) serves as cofactor.

The protein localises to the cytoplasm. It catalyses the reaction 2 D-sedoheptulose 7-phosphate = D-glycero-alpha-D-manno-heptose 7-phosphate + D-glycero-beta-D-manno-heptose 7-phosphate. It participates in carbohydrate biosynthesis; D-glycero-D-manno-heptose 7-phosphate biosynthesis; D-glycero-alpha-D-manno-heptose 7-phosphate and D-glycero-beta-D-manno-heptose 7-phosphate from sedoheptulose 7-phosphate: step 1/1. Its function is as follows. Catalyzes the isomerization of sedoheptulose 7-phosphate in D-glycero-D-manno-heptose 7-phosphate. The protein is Phosphoheptose isomerase of Dechloromonas aromatica (strain RCB).